The primary structure comprises 137 residues: Regulator of cell cycle RGCC (137 aa).

Disordered regions lie at residues 1-20 (MKPP…APAL) and 57-80 (LERM…SESA). The segment covering 65 to 80 (SASVSDSSGFSDSESA) has biased composition (low complexity). Phosphoserine is present on residues Ser67, Ser69, Ser71, Ser75, Ser91, and Ser97. Position 111 is a phosphothreonine; by CDK1 (Thr111).

As to quaternary structure, interacts with SMAD3. Interacts with CDK1 and PLK1. In terms of tissue distribution, detected in brain, heart and liver (at protein level). Highly expressed in liver, skeletal muscle, kidney and pancreas. Detected at lower levels in heart, brain and placenta. Detected in aorta endothelial cells. Overexpressed in colon, breast, prostate, bladder, lung, and ovarian cancer tissues.

The protein localises to the cytoplasm. The protein resides in the nucleus. It localises to the cytoskeleton. It is found in the microtubule organizing center. Its subcellular location is the centrosome. Its function is as follows. Modulates the activity of cell cycle-specific kinases. Enhances CDK1 activity. May contribute to the regulation of the cell cycle. May inhibit growth of glioma cells by promoting arrest of mitotic progression at the G2/M transition. Fibrogenic factor contributing to the pathogenesis of renal fibrosis through fibroblast activation. The protein is Regulator of cell cycle RGCC (RGCC) of Homo sapiens (Human).